The sequence spans 239 residues: Ribonuclease HII (239 aa).

The RNase H type-2 domain occupies 30–221 (GPVAGVDEVG…VRRVATRSNG (192 aa)). A divalent metal cation-binding residues include D36, E37, and D130. The disordered stretch occupies residues 217–239 (TRSNGAATAEREADPPQERDGTG). Positions 225 to 239 (AEREADPPQERDGTG) are enriched in basic and acidic residues.

Belongs to the RNase HII family. The cofactor is Mn(2+). Mg(2+) is required as a cofactor.

Its subcellular location is the cytoplasm. It carries out the reaction Endonucleolytic cleavage to 5'-phosphomonoester.. Endonuclease that specifically degrades the RNA of RNA-DNA hybrids. This chain is Ribonuclease HII, found in Mycobacterium ulcerans (strain Agy99).